Consider the following 257-residue polypeptide: Ribosome-associated protein quality control protein P2 (257 aa).

The segment at 1 to 74 is N-terminal domain; the sequence is MSDIYQHFRK…RAERKRAILF (74 aa). Positions 87–166 are central region; the sequence is LQAFNVRYAD…EKIDLSDLNI (80 aa). Positions 181-251 constitute an S4 RNA-binding domain; the sequence is LRLDAVCASM…GKTKKDKWRV (71 aa).

As to quaternary structure, in the presence of chloramphenicol (a translation elongation inhibitor), but not erythromycin or lincomycin, associates with 50S ribosomal subunits with or without a tRNA in the P-site. The S4 domain binds in a similar position to RqcP.

The protein localises to the cytoplasm. Its function is as follows. Part of the ribosome quality control system (RQC), a ribosome-associated complex that mediates the extraction of incompletely synthesized nascent chains from stalled ribosomes and their subsequent degradation. RqcH recruits Ala-charged tRNA, and with RqcP directs the elongation of stalled nascent chains on 50S ribosomal subunits, leading to non-templated C-terminal alanine extensions (Ala tail). The Ala tail promotes nascent chain degradation. RqcP2 (YlmH) overexpression can compensate for RqcP's role in Ala tailing during RQC, restoring Ala tail addition to peptides in stalled ribosomes. Overexpression complements a double ssrA-rqcP double deletion, but not an ssrA-rqcH double deletion. Functionally, the majority of tagged protein is associated with tRNA-less 50S subunits, suggesting it might also play a role in late stage 50S subunit biogenesis. This is Ribosome-associated protein quality control protein P2 from Bacillus subtilis (strain 168).